The sequence spans 452 residues: MSLTTVILAAGKGTRMRSALPKVLHKVAGKTMVQHVIDNAKALGATTTNLVYGHGGELLQQQLANNNVNWVLQAEQLGTGHAVAQANSHVNDDDTVLILYGDVPLTKQSTLERLLAATPKHGLAVLTVNLANPNGYGRMLRVDGKLVGIVEQKDASPEQLLISEVNTGIMAVNGRLLKSWLGNLSNNNAQGEYYLTDIVAMAHSEGVEITSAQPDHPMEVEGANNRIQLAGLERAYQAWQAQELMLNGATLADPARIDVRGTVTTGEDVLIDINVIFEGKVTIGHNVEIGPNCVLKNCSIGDNVIIKANTLIEDATVAAKCTLGPYARLRPGAIMEEDSHVGNFVEMKKTRLGKGSKANHLSYLGDAEIGEKVNIGAGTITCNYDGVNKAKTIIGNNAFIGSNSSLVAPVNIGAMATIGAGSVITNTVADEQLAIARGKQRNLDGWKRPVKK.

The pyrophosphorylase stretch occupies residues 1-226 (MSLTTVILAA…PMEVEGANNR (226 aa)). Residues 8 to 11 (LAAG), Lys22, Gln73, 78 to 79 (GT), 100 to 102 (YGD), Gly137, Glu151, Asn166, and Asn224 each bind UDP-N-acetyl-alpha-D-glucosamine. Asp102 provides a ligand contact to Mg(2+). Asn224 is a Mg(2+) binding site. Positions 227 to 247 (IQLAGLERAYQAWQAQELMLN) are linker. The N-acetyltransferase stretch occupies residues 248–452 (GATLADPARI…LDGWKRPVKK (205 aa)). Residues Arg330 and Lys348 each coordinate UDP-N-acetyl-alpha-D-glucosamine. The Proton acceptor role is filled by His360. Residues Tyr363 and Asn374 each contribute to the UDP-N-acetyl-alpha-D-glucosamine site. Residues Ala377, 383-384 (NY), Ser402, Ala420, and Arg437 each bind acetyl-CoA.

It in the N-terminal section; belongs to the N-acetylglucosamine-1-phosphate uridyltransferase family. This sequence in the C-terminal section; belongs to the transferase hexapeptide repeat family. As to quaternary structure, homotrimer. Mg(2+) serves as cofactor.

It localises to the cytoplasm. The catalysed reaction is alpha-D-glucosamine 1-phosphate + acetyl-CoA = N-acetyl-alpha-D-glucosamine 1-phosphate + CoA + H(+). It carries out the reaction N-acetyl-alpha-D-glucosamine 1-phosphate + UTP + H(+) = UDP-N-acetyl-alpha-D-glucosamine + diphosphate. It functions in the pathway nucleotide-sugar biosynthesis; UDP-N-acetyl-alpha-D-glucosamine biosynthesis; N-acetyl-alpha-D-glucosamine 1-phosphate from alpha-D-glucosamine 6-phosphate (route II): step 2/2. Its pathway is nucleotide-sugar biosynthesis; UDP-N-acetyl-alpha-D-glucosamine biosynthesis; UDP-N-acetyl-alpha-D-glucosamine from N-acetyl-alpha-D-glucosamine 1-phosphate: step 1/1. The protein operates within bacterial outer membrane biogenesis; LPS lipid A biosynthesis. Its function is as follows. Catalyzes the last two sequential reactions in the de novo biosynthetic pathway for UDP-N-acetylglucosamine (UDP-GlcNAc). The C-terminal domain catalyzes the transfer of acetyl group from acetyl coenzyme A to glucosamine-1-phosphate (GlcN-1-P) to produce N-acetylglucosamine-1-phosphate (GlcNAc-1-P), which is converted into UDP-GlcNAc by the transfer of uridine 5-monophosphate (from uridine 5-triphosphate), a reaction catalyzed by the N-terminal domain. The chain is Bifunctional protein GlmU from Pseudoalteromonas translucida (strain TAC 125).